The primary structure comprises 141 residues: Cystatin-SA (141 aa).

The signal sequence occupies residues 1–20 (MAWPLCTLLLLLATQAVALA). The Secondary area of contact signature appears at 76 to 80 (QIVGG). Intrachain disulfides connect Cys94-Cys104 and Cys118-Cys138.

As to expression, expressed in submandibular and sublingual saliva but not in parotid saliva (at protein level). Expressed in submandibular gland and parotid gland.

The protein resides in the secreted. In terms of biological role, thiol protease inhibitor. This Homo sapiens (Human) protein is Cystatin-SA (CST2).